Here is a 228-residue protein sequence, read N- to C-terminus: Adenosylcobinamide-GDP ribazoletransferase (228 aa).

Transmembrane regions (helical) follow at residues 24–44 (VWML…ILYL), 50–70 (NVLS…DGLA), 96–116 (IAGT…LFSA), 117–137 (PFYS…LALA), 159–176 (VFLG…ILLY), and 181–198 (IFAL…KISL).

The protein belongs to the CobS family. The cofactor is Mg(2+).

It localises to the cell membrane. It catalyses the reaction alpha-ribazole + adenosylcob(III)inamide-GDP = adenosylcob(III)alamin + GMP + H(+). It carries out the reaction alpha-ribazole 5'-phosphate + adenosylcob(III)inamide-GDP = adenosylcob(III)alamin 5'-phosphate + GMP + H(+). It participates in cofactor biosynthesis; adenosylcobalamin biosynthesis; adenosylcobalamin from cob(II)yrinate a,c-diamide: step 7/7. Joins adenosylcobinamide-GDP and alpha-ribazole to generate adenosylcobalamin (Ado-cobalamin). Also synthesizes adenosylcobalamin 5'-phosphate from adenosylcobinamide-GDP and alpha-ribazole 5'-phosphate. This is Adenosylcobinamide-GDP ribazoletransferase from Pyrococcus furiosus (strain ATCC 43587 / DSM 3638 / JCM 8422 / Vc1).